A 168-amino-acid chain; its full sequence is Phosphopantetheine adenylyltransferase (168 aa).

Residue Thr14 coordinates substrate. ATP-binding positions include 14–15 (TF) and His22. Positions 46, 78, and 92 each coordinate substrate. Residues 93–95 (GLR), Glu103, and 128–134 (YSFISSS) each bind ATP.

It belongs to the bacterial CoaD family. Homohexamer. It depends on Mg(2+) as a cofactor.

It localises to the cytoplasm. The enzyme catalyses (R)-4'-phosphopantetheine + ATP + H(+) = 3'-dephospho-CoA + diphosphate. The protein operates within cofactor biosynthesis; coenzyme A biosynthesis; CoA from (R)-pantothenate: step 4/5. In terms of biological role, reversibly transfers an adenylyl group from ATP to 4'-phosphopantetheine, yielding dephospho-CoA (dPCoA) and pyrophosphate. The protein is Phosphopantetheine adenylyltransferase of Xanthomonas campestris pv. campestris (strain 8004).